A 322-amino-acid chain; its full sequence is Ferredoxin--NADP reductase (322 aa).

FAD-binding residues include D34, Q42, Y47, V87, F120, D279, and T320.

Belongs to the ferredoxin--NADP reductase type 2 family. In terms of assembly, homodimer. Requires FAD as cofactor.

The catalysed reaction is 2 reduced [2Fe-2S]-[ferredoxin] + NADP(+) + H(+) = 2 oxidized [2Fe-2S]-[ferredoxin] + NADPH. The protein is Ferredoxin--NADP reductase of Streptococcus sanguinis (strain SK36).